Here is a 590-residue protein sequence, read N- to C-terminus: Histone-binding protein N1/N2 (590 aa).

The interval 1–30 is disordered; it reads MAEETAALSTEKTEDTSTAPSTSAEKADGI. The TPR 1 repeat unit spans residues 36–69; it reads AKRLMGAGQKHLVMKDVRSAVNLFQEASSLLAKQ. The segment at 102–328 is disordered; that stretch reads ALEGMPEDDE…EKETEEEDVG (227 aa). Residues 106-120 show a composition bias toward acidic residues; that stretch reads MPEDDEEEAEKEEDP. Basic and acidic residues-rich tracts occupy residues 128–250 and 262–275; these read LDEK…DAKE and AEEK…ESKE. Residues 293–327 show a composition bias toward acidic residues; the sequence is EKMEEEEEGEDSEENEDGTEENEGTEEKETEEEDV. 2 TPR repeats span residues 357-390 and 399-432; these read AQAH…QKEH and AETH…IEKR. The disordered stretch occupies residues 492 to 590; it reads GGSSGFSKEN…METATVESTA (99 aa). Over residues 496–525 the composition is skewed to polar residues; sequence GFSKENGSTSSSSAVEKSGDSTVPVTNCVS. A Nuclear localization signal motif is present at residues 531-537; the sequence is VRKKRKT. Residues 536–553 are compositionally biased toward basic and acidic residues; the sequence is KTEEESPLKDKDAKKSKQ.

The protein belongs to the NASP family.

It localises to the nucleus. In terms of biological role, this protein is involved in nucleosome assembly. It is bound to H3 and H4 in the absence of DNA, but released from H3 and H4 in the presence of DNA. The chain is Histone-binding protein N1/N2 from Xenopus laevis (African clawed frog).